Consider the following 171-residue polypeptide: Mitochondrial import inner membrane translocase subunit Tim17-A (171 aa).

Cysteines 9 and 78 form a disulfide. 3 consecutive transmembrane segments (helical) span residues 17–37 (CGGA…IKGF), 63–77 (GGSF…SMID), and 113–133 (VGSA…GILL). Residues 144–171 (GPQFAEDPSQLPSTQLPSSPFGDYRQYQ) form a disordered region. A compositionally biased stretch (low complexity) spans 151–163 (PSQLPSTQLPSSP).

Belongs to the Tim17/Tim22/Tim23 family. As to quaternary structure, component of the TIM23 complex at least composed of TIMM23, TIMM17 (TIMM17A or TIMM17B) and TIMM50. The complex interacts with the TIMM44 component of the PAM complex and with DNAJC15. Post-translationally, degraded by YMEL1 downstream of the integrated stress response (ISR).

The protein resides in the mitochondrion inner membrane. Functionally, essential component of the TIM23 complex, a complex that mediates the translocation of transit peptide-containing proteins across the mitochondrial inner membrane. This Homo sapiens (Human) protein is Mitochondrial import inner membrane translocase subunit Tim17-A (TIMM17A).